The chain runs to 378 residues: UDP-N-acetylenolpyruvoylglucosamine reductase (378 aa).

Residues 15 to 185 form the FAD-binding PCMH-type domain; that stretch reads VGGTPERLLE…LSVDLELADH (171 aa). R163 is a catalytic residue. S248 functions as the Proton donor in the catalytic mechanism. E370 is a catalytic residue.

It belongs to the MurB family. It depends on FAD as a cofactor.

It localises to the cytoplasm. The enzyme catalyses UDP-N-acetyl-alpha-D-muramate + NADP(+) = UDP-N-acetyl-3-O-(1-carboxyvinyl)-alpha-D-glucosamine + NADPH + H(+). The protein operates within cell wall biogenesis; peptidoglycan biosynthesis. In terms of biological role, cell wall formation. This Leifsonia xyli subsp. xyli (strain CTCB07) protein is UDP-N-acetylenolpyruvoylglucosamine reductase.